Consider the following 531-residue polypeptide: Cytochrome c oxidase subunit 1 (531 aa).

Residues Ile18 to Ile38 traverse the membrane as a helical segment. Positions 41 and 46 each coordinate Ca(2+). 6 consecutive transmembrane segments (helical) span residues Val59–Gly79, Ile103–Thr123, Ala149–Val169, Pro185–Leu205, Leu237–Ile257, and Ile269–Val289. Fe(II)-heme a is bound at residue His64. His243 lines the Cu cation pocket. The segment at residues His243–Tyr247 is a cross-link (1'-histidyl-3'-tyrosine (His-Tyr)). Tyr247 is an O2 binding site. Cu cation contacts are provided by His292 and His293. 2 helical membrane-spanning segments follow: residues Met312–Gly332 and Met340–Leu360. Mg(2+) contacts are provided by His370 and Asp371. His378 is a binding site for heme a3. His380 contributes to the Fe(II)-heme a binding site. The next 2 membrane-spanning stretches (helical) occupy residues Met385–Leu405 and Val414–Gly434. Pro443 serves as a coordination point for Ca(2+). The chain crosses the membrane as a helical span at residues Trp458–Leu478.

It belongs to the heme-copper respiratory oxidase family. In terms of assembly, component of the cytochrome c oxidase (complex IV, CIV), a multisubunit enzyme composed of a catalytic core of 3 subunits and several supernumerary subunits. The complex exists as a monomer or a dimer and forms supercomplexes (SCs) in the inner mitochondrial membrane with ubiquinol-cytochrome c oxidoreductase (cytochrome b-c1 complex, complex III, CIII). The cofactor is heme. Cu cation is required as a cofactor.

It is found in the mitochondrion inner membrane. It carries out the reaction 4 Fe(II)-[cytochrome c] + O2 + 8 H(+)(in) = 4 Fe(III)-[cytochrome c] + 2 H2O + 4 H(+)(out). The protein operates within energy metabolism; oxidative phosphorylation. Component of the cytochrome c oxidase, the last enzyme in the mitochondrial electron transport chain which drives oxidative phosphorylation. The respiratory chain contains 3 multisubunit complexes succinate dehydrogenase (complex II, CII), ubiquinol-cytochrome c oxidoreductase (cytochrome b-c1 complex, complex III, CIII) and cytochrome c oxidase (complex IV, CIV), that cooperate to transfer electrons derived from NADH and succinate to molecular oxygen, creating an electrochemical gradient over the inner membrane that drives transmembrane transport and the ATP synthase. Cytochrome c oxidase is the component of the respiratory chain that catalyzes the reduction of oxygen to water. Electrons originating from reduced cytochrome c in the intermembrane space (IMS) are transferred via the dinuclear copper A center (CU(A)) of subunit 2 and heme A of subunit 1 to the active site in subunit 1, a binuclear center (BNC) formed by heme A3 and copper B (CU(B)). The BNC reduces molecular oxygen to 2 water molecules using 4 electrons from cytochrome c in the IMS and 4 protons from the mitochondrial matrix. This chain is Cytochrome c oxidase subunit 1 (COX1), found in Candida albicans (strain SC5314 / ATCC MYA-2876) (Yeast).